The sequence spans 388 residues: Nuclear hormone receptor family member nhr-16 (388 aa).

The segment at residues 11–86 is a DNA-binding region (nuclear receptor); it reads FLKCAICQES…VGMNPAGVQQ (76 aa). 2 NR C4-type zinc fingers span residues 14-34 and 50-74; these read CAICQESAEGFHFGAEACRAC and CQGNNDCDVTINIRCMCRACRYIKC. The NR LBD domain maps to 115 to 387; that stretch reads PPSSLMLHIP…DEFYNLMSGR (273 aa).

Belongs to the nuclear hormone receptor family.

Its subcellular location is the nucleus. In terms of biological role, orphan nuclear receptor. This is Nuclear hormone receptor family member nhr-16 (nhr-16) from Caenorhabditis elegans.